The chain runs to 369 residues: Anhydro-N-acetylmuramic acid kinase (369 aa).

12–19 (GTSLDGVD) provides a ligand contact to ATP.

The protein belongs to the anhydro-N-acetylmuramic acid kinase family.

The catalysed reaction is 1,6-anhydro-N-acetyl-beta-muramate + ATP + H2O = N-acetyl-D-muramate 6-phosphate + ADP + H(+). Its pathway is amino-sugar metabolism; 1,6-anhydro-N-acetylmuramate degradation. The protein operates within cell wall biogenesis; peptidoglycan recycling. In terms of biological role, catalyzes the specific phosphorylation of 1,6-anhydro-N-acetylmuramic acid (anhMurNAc) with the simultaneous cleavage of the 1,6-anhydro ring, generating MurNAc-6-P. Is required for the utilization of anhMurNAc either imported from the medium or derived from its own cell wall murein, and thus plays a role in cell wall recycling. The polypeptide is Anhydro-N-acetylmuramic acid kinase (Escherichia coli (strain K12 / MC4100 / BW2952)).